Here is a 229-residue protein sequence, read N- to C-terminus: Ras-related protein RABA6b (229 aa).

A GTP-binding site is contributed by 20–27 (GDSAVGKS). The short motif at 42 to 50 (SKPTIGVDF) is the Effector region element. Residues 68–72 (DTAGQ), 126–129 (NKSD), and 156–157 (SA) each bind GTP. Residues cysteine 226 and cysteine 227 are each lipidated (S-geranylgeranyl cysteine).

The protein belongs to the small GTPase superfamily. Rab family.

It is found in the cell membrane. Functionally, intracellular vesicle trafficking and protein transport. The polypeptide is Ras-related protein RABA6b (RABA6B) (Arabidopsis thaliana (Mouse-ear cress)).